Consider the following 544-residue polypeptide: Chaperonin GroEL (544 aa).

ATP is bound by residues 30-33, lysine 51, 87-91, glycine 415, 479-481, and aspartate 495; these read TLGP, DGTTT, and NAA.

Belongs to the chaperonin (HSP60) family. In terms of assembly, forms a cylinder of 14 subunits composed of two heptameric rings stacked back-to-back. Interacts with the co-chaperonin GroES.

It is found in the cytoplasm. It carries out the reaction ATP + H2O + a folded polypeptide = ADP + phosphate + an unfolded polypeptide.. In terms of biological role, together with its co-chaperonin GroES, plays an essential role in assisting protein folding. The GroEL-GroES system forms a nano-cage that allows encapsulation of the non-native substrate proteins and provides a physical environment optimized to promote and accelerate protein folding. This is Chaperonin GroEL from Francisella tularensis subsp. tularensis (strain WY96-3418).